Consider the following 433-residue polypeptide: Enolase (433 aa).

Residue Gln-167 participates in (2R)-2-phosphoglycerate binding. The active-site Proton donor is Glu-209. 3 residues coordinate Mg(2+): Asp-246, Glu-291, and Asp-318. (2R)-2-phosphoglycerate is bound by residues Lys-343, Arg-372, Ser-373, and Lys-394. Lys-343 acts as the Proton acceptor in catalysis.

Belongs to the enolase family. As to quaternary structure, component of the RNA degradosome, a multiprotein complex involved in RNA processing and mRNA degradation. It depends on Mg(2+) as a cofactor.

The protein localises to the cytoplasm. It localises to the secreted. The protein resides in the cell surface. It catalyses the reaction (2R)-2-phosphoglycerate = phosphoenolpyruvate + H2O. Its pathway is carbohydrate degradation; glycolysis; pyruvate from D-glyceraldehyde 3-phosphate: step 4/5. Functionally, catalyzes the reversible conversion of 2-phosphoglycerate (2-PG) into phosphoenolpyruvate (PEP). It is essential for the degradation of carbohydrates via glycolysis. In Shewanella piezotolerans (strain WP3 / JCM 13877), this protein is Enolase.